The primary structure comprises 125 residues: Glutamyl-tRNA(Gln) amidotransferase subunit C, mitochondrial (125 aa).

It belongs to the GatC family. Subunit of the heterotrimeric GatCAB amidotransferase (AdT) complex, composed of A, B and C subunits.

It is found in the mitochondrion. It catalyses the reaction L-glutamyl-tRNA(Gln) + L-glutamine + ATP + H2O = L-glutaminyl-tRNA(Gln) + L-glutamate + ADP + phosphate + H(+). In terms of biological role, allows the formation of correctly charged Gln-tRNA(Gln) through the transamidation of misacylated Glu-tRNA(Gln) in the mitochondria. The reaction takes place in the presence of glutamine and ATP through an activated gamma-phospho-Glu-tRNA(Gln). The chain is Glutamyl-tRNA(Gln) amidotransferase subunit C, mitochondrial from Drosophila mojavensis (Fruit fly).